The sequence spans 601 residues: Elongation factor 4 (601 aa).

The tr-type G domain occupies 6-188; the sequence is KNIRNFSIIA…QIIKKIPAPD (183 aa). GTP-binding positions include 18 to 23 and 135 to 138; these read DHGKST and NKID.

It belongs to the TRAFAC class translation factor GTPase superfamily. Classic translation factor GTPase family. LepA subfamily.

The protein localises to the cell membrane. It catalyses the reaction GTP + H2O = GDP + phosphate + H(+). Required for accurate and efficient protein synthesis under certain stress conditions. May act as a fidelity factor of the translation reaction, by catalyzing a one-codon backward translocation of tRNAs on improperly translocated ribosomes. Back-translocation proceeds from a post-translocation (POST) complex to a pre-translocation (PRE) complex, thus giving elongation factor G a second chance to translocate the tRNAs correctly. Binds to ribosomes in a GTP-dependent manner. This chain is Elongation factor 4, found in Buchnera aphidicola subsp. Schizaphis graminum (strain Sg).